The chain runs to 103 residues: UPF0122 protein FN1394 (103 aa).

The protein belongs to the UPF0122 family.

Functionally, might take part in the signal recognition particle (SRP) pathway. This is inferred from the conservation of its genetic proximity to ftsY/ffh. May be a regulatory protein. The chain is UPF0122 protein FN1394 from Fusobacterium nucleatum subsp. nucleatum (strain ATCC 25586 / DSM 15643 / BCRC 10681 / CIP 101130 / JCM 8532 / KCTC 2640 / LMG 13131 / VPI 4355).